The following is a 359-amino-acid chain: MSPDAIKLLKEKVFDKSKWMQLPRDVVIGHDVLGQIAPVCEDLKLGRSALLISGKNTMDRAGKTVQDVIGKTCDVMVYISDEISPAVIKDAEKAAKDVDFVIGVGGGRVIDTAKIVSYNLDRQFVSVPTAASHDGIASARASVPTGEGNVSLEAHPPIAIIADTCIIASAPHRLLAAGCADVISNYTAILDWEMAHRIKGEPMSEYAVALSKMTAEILVKNADLIRPNQEQSAWFVTKALVSSGVAMSIAGSSRPASGGEHKFSHALDRLAPNKALHGESCGIGTIISMYLHGGDWRGIRQSLRTIGAPVTPTDVGIADEIAVEALLMAKTIRPERFTIFDMGITRDSAEKLIQMLYAD.

NAD(+)-binding positions include 107 to 111 (GRVID) and 129 to 132 (TAAS). D134 serves as a coordination point for substrate. S138 provides a ligand contact to NAD(+). Residue D181 coordinates substrate. Zn(2+) contacts are provided by D181 and H261. A substrate-binding site is contributed by H265. H277 lines the Zn(2+) pocket.

This sequence belongs to the glycerol-1-phosphate dehydrogenase family. Requires Zn(2+) as cofactor.

The protein localises to the cytoplasm. It catalyses the reaction sn-glycerol 1-phosphate + NAD(+) = dihydroxyacetone phosphate + NADH + H(+). It carries out the reaction sn-glycerol 1-phosphate + NADP(+) = dihydroxyacetone phosphate + NADPH + H(+). The protein operates within membrane lipid metabolism; glycerophospholipid metabolism. Functionally, catalyzes the NAD(P)H-dependent reduction of dihydroxyacetonephosphate (DHAP or glycerone phosphate) to glycerol 1-phosphate (G1P). The G1P thus generated is used as the glycerophosphate backbone of phospholipids in the cellular membranes of Archaea. The polypeptide is Glycerol-1-phosphate dehydrogenase [NAD(P)+] (Methanoregula boonei (strain DSM 21154 / JCM 14090 / 6A8)).